Reading from the N-terminus, the 241-residue chain is Chaperone protein FimC (241 aa).

Residues 1–36 form the signal peptide; it reads MSNKNVNVRKSQEITFCLLAGILMFMAMMVAGRAEA.

This sequence belongs to the periplasmic pilus chaperone family.

The protein resides in the periplasm. In terms of biological role, required for the biogenesis of type 1 fimbriae. Binds and interact with FimH. This Escherichia coli (strain K12) protein is Chaperone protein FimC (fimC).